Here is a 179-residue protein sequence, read N- to C-terminus: Large ribosomal subunit protein uL5 (179 aa).

It belongs to the universal ribosomal protein uL5 family. As to quaternary structure, part of the 50S ribosomal subunit; part of the 5S rRNA/L5/L18/L25 subcomplex. Contacts the 5S rRNA and the P site tRNA. Forms a bridge to the 30S subunit in the 70S ribosome.

In terms of biological role, this is one of the proteins that bind and probably mediate the attachment of the 5S RNA into the large ribosomal subunit, where it forms part of the central protuberance. In the 70S ribosome it contacts protein S13 of the 30S subunit (bridge B1b), connecting the 2 subunits; this bridge is implicated in subunit movement. Contacts the P site tRNA; the 5S rRNA and some of its associated proteins might help stabilize positioning of ribosome-bound tRNAs. This chain is Large ribosomal subunit protein uL5, found in Chromobacterium violaceum (strain ATCC 12472 / DSM 30191 / JCM 1249 / CCUG 213 / NBRC 12614 / NCIMB 9131 / NCTC 9757 / MK).